The primary structure comprises 673 residues: DNA ligase (673 aa).

NAD(+) contacts are provided by residues 35 to 39 (DAEYD), 84 to 85 (SL), and E115. Residue K117 is the N6-AMP-lysine intermediate of the active site. NAD(+) contacts are provided by R138, E175, K292, and K316. Positions 410, 413, 428, and 434 each coordinate Zn(2+). The 82-residue stretch at 592–673 (PRKLPLQGLV…FLDLLERGRP (82 aa)) folds into the BRCT domain.

Belongs to the NAD-dependent DNA ligase family. LigA subfamily. Mg(2+) serves as cofactor. Requires Mn(2+) as cofactor.

The enzyme catalyses NAD(+) + (deoxyribonucleotide)n-3'-hydroxyl + 5'-phospho-(deoxyribonucleotide)m = (deoxyribonucleotide)n+m + AMP + beta-nicotinamide D-nucleotide.. In terms of biological role, DNA ligase that catalyzes the formation of phosphodiester linkages between 5'-phosphoryl and 3'-hydroxyl groups in double-stranded DNA using NAD as a coenzyme and as the energy source for the reaction. It is essential for DNA replication and repair of damaged DNA. This is DNA ligase from Methylococcus capsulatus (strain ATCC 33009 / NCIMB 11132 / Bath).